The primary structure comprises 300 residues: Nucleotide-binding protein TM1040_2438 (300 aa).

24–31 serves as a coordination point for ATP; sequence GPSGAGRT. 71-74 serves as a coordination point for GTP; the sequence is DPRN.

It belongs to the RapZ-like family.

Displays ATPase and GTPase activities. The polypeptide is Nucleotide-binding protein TM1040_2438 (Ruegeria sp. (strain TM1040) (Silicibacter sp.)).